A 556-amino-acid polypeptide reads, in one-letter code: Cytochrome P450 4g1 (556 aa).

Heme is bound by residues Glu356 and Cys497.

The protein belongs to the cytochrome P450 family. The cofactor is heme.

The protein resides in the endoplasmic reticulum membrane. It localises to the microsome membrane. Its function is as follows. May be involved in the metabolism of insect hormones and in the breakdown of synthetic insecticides. This Drosophila melanogaster (Fruit fly) protein is Cytochrome P450 4g1 (Cyp4g1).